The chain runs to 130 residues: Small ribosomal subunit protein uS11c (130 aa).

The protein belongs to the universal ribosomal protein uS11 family. As to quaternary structure, part of the 30S ribosomal subunit.

It localises to the plastid. It is found in the chloroplast. This is Small ribosomal subunit protein uS11c from Porphyra purpurea (Red seaweed).